We begin with the raw amino-acid sequence, 510 residues long: Probable DNA ligase (510 aa).

Glu-210 contributes to the ATP binding site. The N6-AMP-lysine intermediate role is filled by Lys-212. Residues Arg-217, Arg-232, Glu-261, Phe-296, Arg-367, and Lys-373 each coordinate ATP.

This sequence belongs to the ATP-dependent DNA ligase family. The cofactor is Mg(2+).

The enzyme catalyses ATP + (deoxyribonucleotide)n-3'-hydroxyl + 5'-phospho-(deoxyribonucleotide)m = (deoxyribonucleotide)n+m + AMP + diphosphate.. Functionally, DNA ligase that seals nicks in double-stranded DNA during DNA replication, DNA recombination and DNA repair. This Saccharopolyspora erythraea (strain ATCC 11635 / DSM 40517 / JCM 4748 / NBRC 13426 / NCIMB 8594 / NRRL 2338) protein is Probable DNA ligase.